The following is a 127-amino-acid chain: Venom protein family 16 protein 1 (127 aa).

The N-terminal stretch at 1–18 (MWIWYSLLFFGVCHLAHS) is a signal peptide.

As to expression, expressed by the venom gland (anterior main gland) (at protein level).

It is found in the secreted. In Platymeris rhadamanthus (Red spot assassin bug), this protein is Venom protein family 16 protein 1.